Consider the following 191-residue polypeptide: Protein GrpE (191 aa).

Composition is skewed to basic and acidic residues over residues 1–19 (MKDE…EPES) and 29–45 (QQGE…GEIK). Residues 1–45 (MKDEHNQEHDHLSPKEPESYQKAYACKEQQGEEKQEASEKEGEIK) are disordered.

This sequence belongs to the GrpE family. As to quaternary structure, homodimer.

Its subcellular location is the cytoplasm. Functionally, participates actively in the response to hyperosmotic and heat shock by preventing the aggregation of stress-denatured proteins, in association with DnaK and GrpE. It is the nucleotide exchange factor for DnaK and may function as a thermosensor. Unfolded proteins bind initially to DnaJ; upon interaction with the DnaJ-bound protein, DnaK hydrolyzes its bound ATP, resulting in the formation of a stable complex. GrpE releases ADP from DnaK; ATP binding to DnaK triggers the release of the substrate protein, thus completing the reaction cycle. Several rounds of ATP-dependent interactions between DnaJ, DnaK and GrpE are required for fully efficient folding. The sequence is that of Protein GrpE from Helicobacter pylori (strain J99 / ATCC 700824) (Campylobacter pylori J99).